The sequence spans 470 residues: tRNA-2-methylthio-N(6)-dimethylallyladenosine synthase (470 aa).

The MTTase N-terminal domain maps to 5-122 (RKLYVKSFGC…LPELLAEAKA (118 aa)). 6 residues coordinate [4Fe-4S] cluster: cysteine 14, cysteine 50, cysteine 85, cysteine 163, cysteine 167, and cysteine 170. Positions 149–383 (RSRGPAAFVT…LLEASKAAFD (235 aa)) constitute a Radical SAM core domain. The 63-residue stretch at 384–446 (ESCRGRTFDI…PNSLAGVPAE (63 aa)) folds into the TRAM domain. The interval 439–470 (SLAGVPAEASEPSVSQSPVSSARSRPLAAMEA) is disordered. Over residues 444-464 (PAEASEPSVSQSPVSSARSRP) the composition is skewed to low complexity.

Belongs to the methylthiotransferase family. MiaB subfamily. As to quaternary structure, monomer. It depends on [4Fe-4S] cluster as a cofactor.

The protein resides in the cytoplasm. It carries out the reaction N(6)-dimethylallyladenosine(37) in tRNA + (sulfur carrier)-SH + AH2 + 2 S-adenosyl-L-methionine = 2-methylsulfanyl-N(6)-dimethylallyladenosine(37) in tRNA + (sulfur carrier)-H + 5'-deoxyadenosine + L-methionine + A + S-adenosyl-L-homocysteine + 2 H(+). Catalyzes the methylthiolation of N6-(dimethylallyl)adenosine (i(6)A), leading to the formation of 2-methylthio-N6-(dimethylallyl)adenosine (ms(2)i(6)A) at position 37 in tRNAs that read codons beginning with uridine. The polypeptide is tRNA-2-methylthio-N(6)-dimethylallyladenosine synthase (Xanthobacter autotrophicus (strain ATCC BAA-1158 / Py2)).